Consider the following 384-residue polypeptide: S-adenosylmethionine synthase (384 aa).

His-15 is an ATP binding site. Residue Asp-17 coordinates Mg(2+). Glu-43 is a K(+) binding site. L-methionine contacts are provided by Glu-56 and Gln-99. Residues 99–109 form a flexible loop region; it reads QSPDINQGVDR. Residues 164-166, 230-231, Asp-239, 245-246, Ala-262, and Lys-266 each bind ATP; these read DAK, RF, and RK. Position 239 (Asp-239) interacts with L-methionine. Position 270 (Lys-270) interacts with L-methionine.

The protein belongs to the AdoMet synthase family. As to quaternary structure, homotetramer; dimer of dimers. Mg(2+) serves as cofactor. K(+) is required as a cofactor.

It is found in the cytoplasm. It catalyses the reaction L-methionine + ATP + H2O = S-adenosyl-L-methionine + phosphate + diphosphate. The protein operates within amino-acid biosynthesis; S-adenosyl-L-methionine biosynthesis; S-adenosyl-L-methionine from L-methionine: step 1/1. Functionally, catalyzes the formation of S-adenosylmethionine (AdoMet) from methionine and ATP. The overall synthetic reaction is composed of two sequential steps, AdoMet formation and the subsequent tripolyphosphate hydrolysis which occurs prior to release of AdoMet from the enzyme. The protein is S-adenosylmethionine synthase of Salmonella heidelberg (strain SL476).